The sequence spans 296 residues: Phosphoribosylaminoimidazole-succinocarboxamide synthase (296 aa).

The protein belongs to the SAICAR synthetase family.

It catalyses the reaction 5-amino-1-(5-phospho-D-ribosyl)imidazole-4-carboxylate + L-aspartate + ATP = (2S)-2-[5-amino-1-(5-phospho-beta-D-ribosyl)imidazole-4-carboxamido]succinate + ADP + phosphate + 2 H(+). It participates in purine metabolism; IMP biosynthesis via de novo pathway; 5-amino-1-(5-phospho-D-ribosyl)imidazole-4-carboxamide from 5-amino-1-(5-phospho-D-ribosyl)imidazole-4-carboxylate: step 1/2. This chain is Phosphoribosylaminoimidazole-succinocarboxamide synthase, found in Geotalea uraniireducens (strain Rf4) (Geobacter uraniireducens).